Here is a 541-residue protein sequence, read N- to C-terminus: Chaperonin GroEL (541 aa).

ATP-binding positions include 29 to 32 (TLGP), 86 to 90 (DGTTT), Gly413, 476 to 478 (NAA), and Asp492.

The protein belongs to the chaperonin (HSP60) family. Forms a cylinder of 14 subunits composed of two heptameric rings stacked back-to-back. Interacts with the co-chaperonin GroES.

It is found in the cytoplasm. The catalysed reaction is ATP + H2O + a folded polypeptide = ADP + phosphate + an unfolded polypeptide.. Functionally, together with its co-chaperonin GroES, plays an essential role in assisting protein folding. The GroEL-GroES system forms a nano-cage that allows encapsulation of the non-native substrate proteins and provides a physical environment optimized to promote and accelerate protein folding. In Streptococcus equi subsp. zooepidemicus (strain MGCS10565), this protein is Chaperonin GroEL.